The following is a 1357-amino-acid chain: DNA-directed RNA polymerase subunit beta (1357 aa).

The protein belongs to the RNA polymerase beta chain family. In terms of assembly, the RNAP catalytic core consists of 2 alpha, 1 beta, 1 beta' and 1 omega subunit. When a sigma factor is associated with the core the holoenzyme is formed, which can initiate transcription.

The enzyme catalyses RNA(n) + a ribonucleoside 5'-triphosphate = RNA(n+1) + diphosphate. DNA-dependent RNA polymerase catalyzes the transcription of DNA into RNA using the four ribonucleoside triphosphates as substrates. This chain is DNA-directed RNA polymerase subunit beta, found in Pseudomonas putida (strain W619).